Reading from the N-terminus, the 357-residue chain is Dihydroorotate dehydrogenase (quinone) (357 aa).

FMN-binding positions include 67–71 and Thr91; that span reads AGFDK. Position 71 (Lys71) interacts with substrate. 116 to 120 serves as a coordination point for substrate; that stretch reads NRMGF. Positions 153 and 186 each coordinate FMN. Position 186 (Asn186) interacts with substrate. The Nucleophile role is filled by Ser189. Asn191 provides a ligand contact to substrate. Residues Lys228 and Thr256 each coordinate FMN. 257 to 258 is a binding site for substrate; that stretch reads NT. FMN-binding positions include Gly282, Gly311, and 332-333; that span reads YT.

It belongs to the dihydroorotate dehydrogenase family. Type 2 subfamily. Monomer. It depends on FMN as a cofactor.

The protein localises to the cell membrane. The catalysed reaction is (S)-dihydroorotate + a quinone = orotate + a quinol. Its pathway is pyrimidine metabolism; UMP biosynthesis via de novo pathway; orotate from (S)-dihydroorotate (quinone route): step 1/1. Catalyzes the conversion of dihydroorotate to orotate with quinone as electron acceptor. This chain is Dihydroorotate dehydrogenase (quinone), found in Arthrobacter sp. (strain FB24).